The chain runs to 304 residues: NADH-cytochrome b5 reductase 2 (304 aa).

A helical membrane pass occupies residues 6–26 (GTPVVVAVAAVAATVLLLLLL). Residues 43–155 (QAKYPLPLVG…RGPNGLLVYK (113 aa)) form the FAD-binding FR-type domain. Residues 135-165 (DSMKIGDVIDFRGPNGLLVYKGSGTFMIKPD) and 174-209 (FAKHLGVIAGGTGITPMLQLIRHITSDPKDSTKCYL) each bind FAD.

Belongs to the flavoprotein pyridine nucleotide cytochrome reductase family. FAD serves as cofactor.

It localises to the membrane. It catalyses the reaction 2 Fe(III)-[cytochrome b5] + NADH = 2 Fe(II)-[cytochrome b5] + NAD(+) + H(+). Its function is as follows. NADH-cytochrome b5 reductases are involved in desaturation and elongation of fatty acids, cholesterol biosynthesis and drug metabolism. This Gallus gallus (Chicken) protein is NADH-cytochrome b5 reductase 2 (CYB5R2).